The following is a 411-amino-acid chain: Secretion apparatus protein BsaZ (411 aa).

Helical transmembrane passes span 28-48 (IVAL…VDLT), 80-100 (IAAP…LVQS), 137-157 (ALLY…LYHA), and 175-195 (IVLT…VLIL). The segment at 341–411 (AANRGGPPPE…APARTGDQNA (71 aa)) is disordered. Residues 370-404 (DACADNAFPDDAPPGAAAPNAGSPDGPAPDGGAPA) are compositionally biased toward low complexity.

Belongs to the type III secretion exporter family.

It is found in the cell membrane. Its function is as follows. Part of the bsa type III secretion system, is involved in the intracellular replication of invading bacteria inside the host cell. Probably necessary for the lysis of the vacuole membrane and escape into the host cell cytoplasm. This chain is Secretion apparatus protein BsaZ (bsaZ), found in Burkholderia pseudomallei (strain 1026b).